The primary structure comprises 260 residues: Indole-3-glycerol phosphate synthase (260 aa).

Belongs to the TrpC family.

The enzyme catalyses 1-(2-carboxyphenylamino)-1-deoxy-D-ribulose 5-phosphate + H(+) = (1S,2R)-1-C-(indol-3-yl)glycerol 3-phosphate + CO2 + H2O. The protein operates within amino-acid biosynthesis; L-tryptophan biosynthesis; L-tryptophan from chorismate: step 4/5. The polypeptide is Indole-3-glycerol phosphate synthase (Lacticaseibacillus paracasei (strain ATCC 334 / BCRC 17002 / CCUG 31169 / CIP 107868 / KCTC 3260 / NRRL B-441) (Lactobacillus paracasei)).